Reading from the N-terminus, the 272-residue chain is ATP synthase subunit a (272 aa).

The next 6 helical transmembrane spans lie at 41–61 (VLNIDSIIFSLVLGCFFLSIF), 110–130 (FVWVFLMNLMDLIPIDFFPFI), 143–165 (VPSADINITLSMSLGVFILILFY), 188–208 (VFFIFNFLLELVSLLSKPISL), 222–242 (IFILIAGLLPWWSQFFLNVPW), and 243–263 (AIFHILIISLQAFIFMVLTIV).

Belongs to the ATPase A chain family. F-type ATPases have 2 components, CF(1) - the catalytic core - and CF(0) - the membrane proton channel. CF(1) has five subunits: alpha(3), beta(3), gamma(1), delta(1), epsilon(1). CF(0) has three main subunits: a(1), b(2) and c(9-12). The alpha and beta chains form an alternating ring which encloses part of the gamma chain. CF(1) is attached to CF(0) by a central stalk formed by the gamma and epsilon chains, while a peripheral stalk is formed by the delta and b chains.

Its subcellular location is the cell membrane. In terms of biological role, key component of the proton channel; it plays a direct role in the translocation of protons across the membrane. This chain is ATP synthase subunit a, found in Buchnera aphidicola subsp. Schizaphis graminum (strain Sg).